The sequence spans 379 residues: MSAGNGTPWGSAAGEESWAASGVAVEGSELPTFSAAAKVRVGVTIVLFVSSAGGNLAVLWSVTRPQPSQLRPSPVRTLFAHLAAADLLVTFVVMPLDATWNITVQWLAEDIACRTLMFLKLMAMYSAAFLPVVIGLDRQAAVLNPLGSRSGVRKLLGAAWGLSFLLALPQLFLFHTVHRAGPVPFTQCVTKGSFKARWQETTYNLFTFRCLFLLPLTAMAICYSHIVLSVSSPQTRKGSHAPAGEFALCRSFDNCPRVRLWALRLALLILLTFILCWTPYYLLGLWYWFSPTMLTEVPPSLSHILFLFGLLNAPLDPLLYGAFTLGCQRGHQELSIDSSNEGSGRMLQQEIHALRQQEVQKTVTSRSAGETKDISITSI.

Topologically, residues 1 to 40 are extracellular; that stretch reads MSAGNGTPWGSAAGEESWAASGVAVEGSELPTFSAAAKVR. A helical transmembrane segment spans residues 41–60; the sequence is VGVTIVLFVSSAGGNLAVLW. Over 61–76 the chain is Cytoplasmic; the sequence is SVTRPQPSQLRPSPVR. A helical transmembrane segment spans residues 77 to 96; it reads TLFAHLAAADLLVTFVVMPL. Residues 97 to 114 lie on the Extracellular side of the membrane; the sequence is DATWNITVQWLAEDIACR. N101 carries N-linked (GlcNAc...) asparagine glycosylation. Residues C113 and C188 are joined by a disulfide bond. A helical transmembrane segment spans residues 115-136; that stretch reads TLMFLKLMAMYSAAFLPVVIGL. Residues 137 to 160 lie on the Cytoplasmic side of the membrane; the sequence is DRQAAVLNPLGSRSGVRKLLGAAW. The chain crosses the membrane as a helical span at residues 161–178; the sequence is GLSFLLALPQLFLFHTVH. The Extracellular segment spans residues 179 to 204; the sequence is RAGPVPFTQCVTKGSFKARWQETTYN. A helical transmembrane segment spans residues 205 to 224; the sequence is LFTFRCLFLLPLTAMAICYS. Residues 225-278 lie on the Cytoplasmic side of the membrane; sequence HIVLSVSSPQTRKGSHAPAGEFALCRSFDNCPRVRLWALRLALLILLTFILCWT. Residues 279-297 form a helical membrane-spanning segment; sequence PYYLLGLWYWFSPTMLTEV. Residues 298–303 lie on the Extracellular side of the membrane; the sequence is PPSLSH. A helical transmembrane segment spans residues 304-323; sequence ILFLFGLLNAPLDPLLYGAF. At 324 to 379 the chain is on the cytoplasmic side; the sequence is TLGCQRGHQELSIDSSNEGSGRMLQQEIHALRQQEVQKTVTSRSAGETKDISITSI.

This sequence belongs to the G-protein coupled receptor 1 family. Phosphorylated on the C-terminal cytoplasmic tail.

The protein resides in the cell membrane. Receptor for gonadotropin releasing hormone II (GnRH II). This receptor mediates its action by association with G proteins that activate a phosphatidylinositol-calcium second messenger system. In Macaca mulatta (Rhesus macaque), this protein is Gonadotropin-releasing hormone II receptor (GNRHR2).